The primary structure comprises 279 residues: uncharacterized protein (279 aa).

Residues 1-31 (MLVQSRTLVTAILSCSLVFGTTVNGASVAIA) form the signal peptide.

This is an uncharacterized protein from Corynebacterium glutamicum (strain ATCC 13032 / DSM 20300 / JCM 1318 / BCRC 11384 / CCUG 27702 / LMG 3730 / NBRC 12168 / NCIMB 10025 / NRRL B-2784 / 534).